The chain runs to 157 residues: Small ribosomal subunit protein uS7 (157 aa).

It belongs to the universal ribosomal protein uS7 family. Part of the 30S ribosomal subunit. Contacts proteins S9 and S11.

In terms of biological role, one of the primary rRNA binding proteins, it binds directly to 16S rRNA where it nucleates assembly of the head domain of the 30S subunit. Is located at the subunit interface close to the decoding center, probably blocks exit of the E-site tRNA. In Caulobacter sp. (strain K31), this protein is Small ribosomal subunit protein uS7.